Reading from the N-terminus, the 1649-residue chain is DNA-directed RNA polymerase subunit beta' (1649 aa).

Zn(2+) contacts are provided by cysteine 63, cysteine 65, cysteine 78, and cysteine 81. Mg(2+) is bound by residues aspartate 747, aspartate 749, and aspartate 751. Zn(2+) is bound by residues cysteine 1078, cysteine 1269, cysteine 1276, and cysteine 1279.

It belongs to the RNA polymerase beta' chain family. In terms of assembly, the RNAP catalytic core consists of 2 alpha, 1 beta, 1 beta' and 1 omega subunit. When a sigma factor is associated with the core the holoenzyme is formed, which can initiate transcription. Mg(2+) serves as cofactor. Zn(2+) is required as a cofactor.

The catalysed reaction is RNA(n) + a ribonucleoside 5'-triphosphate = RNA(n+1) + diphosphate. DNA-dependent RNA polymerase catalyzes the transcription of DNA into RNA using the four ribonucleoside triphosphates as substrates. This is DNA-directed RNA polymerase subunit beta' from Thermosipho melanesiensis (strain DSM 12029 / CIP 104789 / BI429).